The chain runs to 232 residues: Ribonuclease 3 (232 aa).

Residues 7 to 135 (IQAVESKLKF…ILGAVYLDGG (129 aa)) enclose the RNase III domain. Glu48 lines the Mg(2+) pocket. The active site involves Asp52. Residues Asn121 and Glu124 each contribute to the Mg(2+) site. Residue Glu124 is part of the active site. The 70-residue stretch at 160–229 (NPKNRLQQFT…AKQALSTHDD (70 aa)) folds into the DRBM domain.

The protein belongs to the ribonuclease III family. As to quaternary structure, homodimer. Mg(2+) is required as a cofactor.

It is found in the cytoplasm. The catalysed reaction is Endonucleolytic cleavage to 5'-phosphomonoester.. Functionally, digests double-stranded RNA. Involved in the processing of primary rRNA transcript to yield the immediate precursors to the large and small rRNAs (23S and 16S). Processes some mRNAs, and tRNAs when they are encoded in the rRNA operon. Processes pre-crRNA and tracrRNA of type II CRISPR loci if present in the organism. The protein is Ribonuclease 3 of Chlamydia muridarum (strain MoPn / Nigg).